Here is a 168-residue protein sequence, read N- to C-terminus: Probable chemoreceptor glutamine deamidase CheD 2 (168 aa).

The protein belongs to the CheD family.

The catalysed reaction is L-glutaminyl-[protein] + H2O = L-glutamyl-[protein] + NH4(+). Probably deamidates glutamine residues to glutamate on methyl-accepting chemotaxis receptors (MCPs), playing an important role in chemotaxis. The chain is Probable chemoreceptor glutamine deamidase CheD 2 from Leptospira interrogans serogroup Icterohaemorrhagiae serovar copenhageni (strain Fiocruz L1-130).